Consider the following 416-residue polypeptide: Probable glucan 1,3-beta-glucosidase A (416 aa).

A signal peptide spans 1 to 22; it reads MIFKFSQKALVALYLVVGLAEA. E211 (proton donor) is an active-site residue. 2 disulfide bridges follow: C291-C415 and C316-C342. E308 acts as the Nucleophile in catalysis. An N-linked (GlcNAc...) asparagine glycan is attached at N344.

It belongs to the glycosyl hydrolase 5 (cellulase A) family. Monomer. It depends on Mn(2+) as a cofactor.

The protein resides in the secreted. The catalysed reaction is Successive hydrolysis of beta-D-glucose units from the non-reducing ends of (1-&gt;3)-beta-D-glucans, releasing alpha-glucose.. Its function is as follows. Beta-glucanases participate in the metabolism of beta-glucan, the main structural component of the cell wall. It could also function biosynthetically as a transglycosylase. The polypeptide is Probable glucan 1,3-beta-glucosidase A (exgA) (Aspergillus fumigatus (strain CBS 144.89 / FGSC A1163 / CEA10) (Neosartorya fumigata)).